Reading from the N-terminus, the 326-residue chain is tRNA uridine(34) hydroxylase (326 aa).

One can recognise a Rhodanese domain in the interval 123 to 217 (SDPDVLLVDT…YLEEVPEENS (95 aa)). Residue C177 is the Cysteine persulfide intermediate of the active site. A compositionally biased stretch (basic and acidic residues) spans 276–320 (EEQKSRFREREKQVQLANERGETHVGGDAAKLIEQRKQEKKEKKQ). A disordered region spans residues 276–326 (EEQKSRFREREKQVQLANERGETHVGGDAAKLIEQRKQEKKEKKQQQRSSK).

This sequence belongs to the TrhO family.

The catalysed reaction is uridine(34) in tRNA + AH2 + O2 = 5-hydroxyuridine(34) in tRNA + A + H2O. In terms of biological role, catalyzes oxygen-dependent 5-hydroxyuridine (ho5U) modification at position 34 in tRNAs. This chain is tRNA uridine(34) hydroxylase, found in Aliivibrio salmonicida (strain LFI1238) (Vibrio salmonicida (strain LFI1238)).